Here is a 62-residue protein sequence, read N- to C-terminus: uncharacterized protein (62 aa).

This is an uncharacterized protein from Archaeoglobus fulgidus (strain ATCC 49558 / DSM 4304 / JCM 9628 / NBRC 100126 / VC-16).